A 218-amino-acid chain; its full sequence is GCN5-related N-acetyltransferase 9 (218 aa).

The region spanning S36 to T183 is the N-acetyltransferase domain. Acetyl-CoA contacts are provided by residues M112–A114, G120–K125, N152–A154, and F159.

This sequence belongs to the acetyltransferase family. GNAT subfamily. Oligomer. As to expression, expressed throughout the plant.

It is found in the cytoplasm. The protein resides in the nucleus. It carries out the reaction an N-terminal L-alpha-aminoacyl-[protein] + acetyl-CoA = N-terminal N(alpha)-acetyl-L-alpha-aminoacyl-[protein] + CoA + H(+). The enzyme catalyses L-lysyl-[protein] + acetyl-CoA = N(6)-acetyl-L-lysyl-[protein] + CoA + H(+). Functionally, probable protein acetyltransferase with dual specificity triggering both N-alpha-acetylation (NTA) and epsilon-lysine acetylation (KA). The sequence is that of GCN5-related N-acetyltransferase 9 from Arabidopsis thaliana (Mouse-ear cress).